Reading from the N-terminus, the 93-residue chain is Putative pterin-4-alpha-carbinolamine dehydratase (93 aa).

It belongs to the pterin-4-alpha-carbinolamine dehydratase family.

It catalyses the reaction (4aS,6R)-4a-hydroxy-L-erythro-5,6,7,8-tetrahydrobiopterin = (6R)-L-erythro-6,7-dihydrobiopterin + H2O. This chain is Putative pterin-4-alpha-carbinolamine dehydratase, found in Chloroflexus aurantiacus (strain ATCC 29366 / DSM 635 / J-10-fl).